We begin with the raw amino-acid sequence, 265 residues long: 4-diphosphocytidyl-2-C-methyl-D-erythritol kinase (265 aa).

Lys8 is an active-site residue. Residue 95–105 (PIGAGLGGGSS) coordinates ATP. The active site involves Asp135.

This sequence belongs to the GHMP kinase family. IspE subfamily.

It carries out the reaction 4-CDP-2-C-methyl-D-erythritol + ATP = 4-CDP-2-C-methyl-D-erythritol 2-phosphate + ADP + H(+). It participates in isoprenoid biosynthesis; isopentenyl diphosphate biosynthesis via DXP pathway; isopentenyl diphosphate from 1-deoxy-D-xylulose 5-phosphate: step 3/6. Functionally, catalyzes the phosphorylation of the position 2 hydroxy group of 4-diphosphocytidyl-2C-methyl-D-erythritol. This Ureaplasma parvum serovar 3 (strain ATCC 27815 / 27 / NCTC 11736) protein is 4-diphosphocytidyl-2-C-methyl-D-erythritol kinase.